Here is a 199-residue protein sequence, read N- to C-terminus: Holliday junction resolvase RecU (199 aa).

4 residues coordinate Mg(2+): T82, D84, E97, and Q116.

The protein belongs to the RecU family. It depends on Mg(2+) as a cofactor.

It localises to the cytoplasm. It carries out the reaction Endonucleolytic cleavage at a junction such as a reciprocal single-stranded crossover between two homologous DNA duplexes (Holliday junction).. In terms of biological role, endonuclease that resolves Holliday junction intermediates in genetic recombination. Cleaves mobile four-strand junctions by introducing symmetrical nicks in paired strands. Promotes annealing of linear ssDNA with homologous dsDNA. Required for DNA repair, homologous recombination and chromosome segregation. In Streptococcus agalactiae serotype Ia (strain ATCC 27591 / A909 / CDC SS700), this protein is Holliday junction resolvase RecU.